The following is a 134-amino-acid chain: Putative oxidoreductase CatD (134 aa).

Helical transmembrane passes span F5–L25, F46–L66, I70–A90, and P91–L111.

Belongs to the DoxX family.

Its subcellular location is the cell membrane. Functionally, essential for growth and viability in the presence of catechol and probably involved in the detoxification of catechol. The polypeptide is Putative oxidoreductase CatD (catD) (Bacillus subtilis (strain 168)).